The sequence spans 190 residues: Threonylcarbamoyl-AMP synthase (190 aa).

The YrdC-like domain occupies 7-190; sequence ADAISFIVDV…ALTGELFRQG (184 aa).

This sequence belongs to the SUA5 family. TsaC subfamily.

It localises to the cytoplasm. The enzyme catalyses L-threonine + hydrogencarbonate + ATP = L-threonylcarbamoyladenylate + diphosphate + H2O. Its function is as follows. Required for the formation of a threonylcarbamoyl group on adenosine at position 37 (t(6)A37) in tRNAs that read codons beginning with adenine. Catalyzes the conversion of L-threonine, HCO(3)(-)/CO(2) and ATP to give threonylcarbamoyl-AMP (TC-AMP) as the acyladenylate intermediate, with the release of diphosphate. The protein is Threonylcarbamoyl-AMP synthase of Cronobacter sakazakii (strain ATCC BAA-894) (Enterobacter sakazakii).